The chain runs to 249 residues: MSGHSKWSTIKHKKGAADAKRGKVFTKIIKEIMVAARMGGGAIDANPRLRAAVLAAKAENMPKENIERAIKKGTGELEGVAYEEMNYEGYGPGGVAVLVDIMTDNRNRAASDIRHIFSRNGGNLGEAGCVAWMFSKKGSIVFNKDKVSEDELMEIALDAGADDVKDEDDQFEVITSLEEFVNVRAAFDARELAYEVAEITMVPQTTVRVEDEKLAQQLLRLMDGLEDSDDVQNAYANFDIPDEILDRIA.

It belongs to the TACO1 family.

Its subcellular location is the cytoplasm. The chain is Probable transcriptional regulatory protein Sfum_0996 from Syntrophobacter fumaroxidans (strain DSM 10017 / MPOB).